Reading from the N-terminus, the 31-residue chain is Photosystem I reaction center subunit XII (31 aa).

The helical transmembrane segment at 7–26 (QVYVALVIALLPAVLAFRLS) threads the bilayer.

The protein belongs to the PsaM family.

It is found in the cellular thylakoid membrane. In Thermosynechococcus vestitus (strain NIES-2133 / IAM M-273 / BP-1), this protein is Photosystem I reaction center subunit XII.